Reading from the N-terminus, the 156-residue chain is Cytochrome c-type biogenesis protein CcmE 1 (156 aa).

Residues 1-8 (MNATRKQR) lie on the Cytoplasmic side of the membrane. The chain crosses the membrane as a helical; Signal-anchor for type II membrane protein span at residues 9-29 (LCLVIGVLAAAALAVTLIVFA). Over 30–156 (LQRNMSYLFT…ATAAPLTTPR (127 aa)) the chain is Periplasmic. The heme site is built by His-123 and Tyr-127.

It belongs to the CcmE/CycJ family.

The protein localises to the cell inner membrane. Heme chaperone required for the biogenesis of c-type cytochromes. Transiently binds heme delivered by CcmC and transfers the heme to apo-cytochromes in a process facilitated by CcmF and CcmH. The protein is Cytochrome c-type biogenesis protein CcmE 1 of Xanthomonas oryzae pv. oryzae (strain MAFF 311018).